Here is a 311-residue protein sequence, read N- to C-terminus: Endosome-associated-trafficking regulator 1 (311 aa).

Residues 167–278 are a coiled coil; that stretch reads RGNAENGTKN…KSENERLRLG (112 aa).

It belongs to the ENTR1 family.

The protein resides in the cytoplasm. It localises to the early endosome. It is found in the endosome. Its subcellular location is the recycling endosome. The protein localises to the midbody. The protein resides in the cytoskeleton. It localises to the microtubule organizing center. It is found in the centrosome. Its subcellular location is the cilium basal body. Endosome-associated protein that plays a role in membrane receptor sorting, cytokinesis and ciliogenesis. This chain is Endosome-associated-trafficking regulator 1, found in Danio rerio (Zebrafish).